Consider the following 194-residue polypeptide: Probable proteasome subunit beta type-4 (194 aa).

It belongs to the peptidase T1B family. The 26S proteasome consists of a 20S proteasome core and two 19S regulatory subunits. The 20S proteasome core is composed of 28 subunits that are arranged in four stacked rings, resulting in a barrel-shaped structure. The two end rings are each formed by seven alpha subunits, and the two central rings are each formed by seven beta subunits. The catalytic chamber with the active sites is on the inside of the barrel.

The protein resides in the cytoplasm. Its subcellular location is the nucleus. Non-catalytic component of the proteasome, a multicatalytic proteinase complex which is characterized by its ability to cleave peptides with Arg, Phe, Tyr, Leu, and Glu adjacent to the leaving group at neutral or slightly basic pH. The proteasome has an ATP-dependent proteolytic activity. The polypeptide is Probable proteasome subunit beta type-4 (PRO2) (Meyerozyma guilliermondii (strain ATCC 6260 / CBS 566 / DSM 6381 / JCM 1539 / NBRC 10279 / NRRL Y-324) (Yeast)).